The chain runs to 116 residues: uncharacterized protein (116 aa).

The chain crosses the membrane as a helical span at residues 89–109 (VGFVILILLYILTNPNAIELI).

Belongs to the M.jannaschii MJ0023/MJ0349/MJ1072/MJ1074/MJ1107/MJECL16 family.

Its subcellular location is the membrane. This is an uncharacterized protein from Methanocaldococcus jannaschii (strain ATCC 43067 / DSM 2661 / JAL-1 / JCM 10045 / NBRC 100440) (Methanococcus jannaschii).